Reading from the N-terminus, the 438-residue chain is UDP-N-acetylmuramoylalanine--D-glutamate ligase (438 aa).

112-118 (GSNGKST) lines the ATP pocket.

It belongs to the MurCDEF family.

It is found in the cytoplasm. The catalysed reaction is UDP-N-acetyl-alpha-D-muramoyl-L-alanine + D-glutamate + ATP = UDP-N-acetyl-alpha-D-muramoyl-L-alanyl-D-glutamate + ADP + phosphate + H(+). It participates in cell wall biogenesis; peptidoglycan biosynthesis. In terms of biological role, cell wall formation. Catalyzes the addition of glutamate to the nucleotide precursor UDP-N-acetylmuramoyl-L-alanine (UMA). The polypeptide is UDP-N-acetylmuramoylalanine--D-glutamate ligase (Yersinia pestis bv. Antiqua (strain Antiqua)).